The following is a 239-amino-acid chain: ATP-dependent dethiobiotin synthetase BioD (239 aa).

ATP is bound at residue 15–20 (EIGKTF). Residue Thr19 participates in Mg(2+) binding. Lys40 is an active-site residue. Residues Asp57, 118–121 (EGVG), and 178–179 (NH) contribute to the ATP site. The Mg(2+) site is built by Asp57 and Glu118.

The protein belongs to the dethiobiotin synthetase family. Homodimer. Requires Mg(2+) as cofactor.

It is found in the cytoplasm. It catalyses the reaction (7R,8S)-7,8-diammoniononanoate + CO2 + ATP = (4R,5S)-dethiobiotin + ADP + phosphate + 3 H(+). It functions in the pathway cofactor biosynthesis; biotin biosynthesis; biotin from 7,8-diaminononanoate: step 1/2. Catalyzes a mechanistically unusual reaction, the ATP-dependent insertion of CO2 between the N7 and N8 nitrogen atoms of 7,8-diaminopelargonic acid (DAPA, also called 7,8-diammoniononanoate) to form a ureido ring. This Burkholderia cenocepacia (strain HI2424) protein is ATP-dependent dethiobiotin synthetase BioD.